A 144-amino-acid chain; its full sequence is Large ribosomal subunit protein uL15 (144 aa).

The span at 1–10 (MKLHELKPAE) shows a compositional bias: basic and acidic residues. The segment at 1–52 (MKLHELKPAEGSRQVRNRVGRGTSSGNGKTAGRGQKGQKARGKVRLGFEGGQ) is disordered. Over residues 23 to 35 (TSSGNGKTAGRGQ) the composition is skewed to gly residues.

This sequence belongs to the universal ribosomal protein uL15 family. Part of the 50S ribosomal subunit.

In terms of biological role, binds to the 23S rRNA. This chain is Large ribosomal subunit protein uL15, found in Ligilactobacillus salivarius (strain UCC118) (Lactobacillus salivarius).